The sequence spans 394 residues: ATP phosphoribosyltransferase regulatory subunit (394 aa).

It belongs to the class-II aminoacyl-tRNA synthetase family. HisZ subfamily. Heteromultimer composed of HisG and HisZ subunits.

It localises to the cytoplasm. Its pathway is amino-acid biosynthesis; L-histidine biosynthesis; L-histidine from 5-phospho-alpha-D-ribose 1-diphosphate: step 1/9. Functionally, required for the first step of histidine biosynthesis. May allow the feedback regulation of ATP phosphoribosyltransferase activity by histidine. The polypeptide is ATP phosphoribosyltransferase regulatory subunit (Pseudomonas aeruginosa (strain LESB58)).